A 443-amino-acid polypeptide reads, in one-letter code: Tubulin beta chain (443 aa).

8 residues coordinate GTP: glutamine 11, glutamate 69, serine 138, glycine 142, threonine 143, glycine 144, asparagine 204, and asparagine 226. Glutamate 69 contributes to the Mg(2+) binding site.

It belongs to the tubulin family. As to quaternary structure, dimer of alpha and beta chains. A typical microtubule is a hollow water-filled tube with an outer diameter of 25 nm and an inner diameter of 15 nM. Alpha-beta heterodimers associate head-to-tail to form protofilaments running lengthwise along the microtubule wall with the beta-tubulin subunit facing the microtubule plus end conferring a structural polarity. Microtubules usually have 13 protofilaments but different protofilament numbers can be found in some organisms and specialized cells. Requires Mg(2+) as cofactor.

It is found in the cytoplasm. The protein resides in the cytoskeleton. In terms of biological role, tubulin is the major constituent of microtubules, a cylinder consisting of laterally associated linear protofilaments composed of alpha- and beta-tubulin heterodimers. Microtubules grow by the addition of GTP-tubulin dimers to the microtubule end, where a stabilizing cap forms. Below the cap, tubulin dimers are in GDP-bound state, owing to GTPase activity of alpha-tubulin. The polypeptide is Tubulin beta chain (Thalassiosira weissflogii (Marine diatom)).